The sequence spans 366 residues: Uroporphyrinogen decarboxylase (366 aa).

Substrate is bound by residues 28-32 (RQAGR), Asp78, Tyr160, Thr215, and His333.

It belongs to the uroporphyrinogen decarboxylase family. As to quaternary structure, homodimer.

The protein localises to the cytoplasm. The enzyme catalyses uroporphyrinogen III + 4 H(+) = coproporphyrinogen III + 4 CO2. It participates in porphyrin-containing compound metabolism; protoporphyrin-IX biosynthesis; coproporphyrinogen-III from 5-aminolevulinate: step 4/4. In terms of biological role, catalyzes the decarboxylation of four acetate groups of uroporphyrinogen-III to yield coproporphyrinogen-III. The polypeptide is Uroporphyrinogen decarboxylase (Paraburkholderia xenovorans (strain LB400)).